Here is a 224-residue protein sequence, read N- to C-terminus: Putative O-methyltransferase MMAR_4217 (224 aa).

Polar residues predominate over residues 1–11 (MHGTDSSSDTP). Residues 1–20 (MHGTDSSSDTPGQPAPSRAE) form a disordered region. S-adenosyl-L-methionine is bound by residues Val51, Glu73, 75-76 (GT), Ser81, Asp99, and Ile100. Asp147 is a binding site for substrate. Asp149 provides a ligand contact to S-adenosyl-L-methionine.

The protein belongs to the class I-like SAM-binding methyltransferase superfamily. Cation-dependent O-methyltransferase family.

The polypeptide is Putative O-methyltransferase MMAR_4217 (Mycobacterium marinum (strain ATCC BAA-535 / M)).